The following is a 513-amino-acid chain: Fructose import ATP-binding protein FruK (513 aa).

2 ABC transporter domains span residues 8–244 (VVMK…IGKS) and 262–505 (PGEK…IANT). 40-47 (GENGAGKS) contacts ATP.

It belongs to the ABC transporter superfamily. In terms of assembly, the complex is composed of an ATP-binding protein (FruK), two transmembrane proteins (FruF and FruG) and a solute-binding protein (FruE).

The protein localises to the cell membrane. The enzyme catalyses D-fructose(out) + ATP + H2O = D-fructose(in) + ADP + phosphate + H(+). Functionally, part of the high-affinity ABC transporter complex FruEKFG involved in fructose uptake. Can also transport ribose and xylose, with lower affinity. Probably responsible for energy coupling to the transport system. This chain is Fructose import ATP-binding protein FruK, found in Bifidobacterium longum (strain NCC 2705).